Reading from the N-terminus, the 283-residue chain is 4-hydroxy-tetrahydrodipicolinate reductase (283 aa).

NAD(+)-binding positions include Gly15–Met20 and Gly116–Thr118. The active-site Proton donor/acceptor is the His172. Position 173 (His173) interacts with (S)-2,3,4,5-tetrahydrodipicolinate. Lys176 acts as the Proton donor in catalysis. A (S)-2,3,4,5-tetrahydrodipicolinate-binding site is contributed by Gly182–Thr183.

This sequence belongs to the DapB family.

Its subcellular location is the cytoplasm. It catalyses the reaction (S)-2,3,4,5-tetrahydrodipicolinate + NAD(+) + H2O = (2S,4S)-4-hydroxy-2,3,4,5-tetrahydrodipicolinate + NADH + H(+). It carries out the reaction (S)-2,3,4,5-tetrahydrodipicolinate + NADP(+) + H2O = (2S,4S)-4-hydroxy-2,3,4,5-tetrahydrodipicolinate + NADPH + H(+). Its pathway is amino-acid biosynthesis; L-lysine biosynthesis via DAP pathway; (S)-tetrahydrodipicolinate from L-aspartate: step 4/4. Catalyzes the conversion of 4-hydroxy-tetrahydrodipicolinate (HTPA) to tetrahydrodipicolinate. This Prochlorococcus marinus (strain MIT 9313) protein is 4-hydroxy-tetrahydrodipicolinate reductase.